Here is a 276-residue protein sequence, read N- to C-terminus: NAD kinase (276 aa).

Catalysis depends on D61, which acts as the Proton acceptor. NAD(+) contacts are provided by residues 61–62 (DG), R66, 135–136 (NE), R146, H163, D165, and A200.

The protein belongs to the NAD kinase family. Requires a divalent metal cation as cofactor.

It is found in the cytoplasm. It catalyses the reaction NAD(+) + ATP = ADP + NADP(+) + H(+). In terms of biological role, involved in the regulation of the intracellular balance of NAD and NADP, and is a key enzyme in the biosynthesis of NADP. Catalyzes specifically the phosphorylation on 2'-hydroxyl of the adenosine moiety of NAD to yield NADP. This is NAD kinase from Chloroflexus aggregans (strain MD-66 / DSM 9485).